Reading from the N-terminus, the 534-residue chain is Bifunctional purine biosynthesis protein PurH (534 aa).

One can recognise an MGS-like domain in the interval 6 to 151; sequence TRLPVRRALI…KNHKDVAIVV (146 aa).

This sequence belongs to the PurH family.

The catalysed reaction is (6R)-10-formyltetrahydrofolate + 5-amino-1-(5-phospho-beta-D-ribosyl)imidazole-4-carboxamide = 5-formamido-1-(5-phospho-D-ribosyl)imidazole-4-carboxamide + (6S)-5,6,7,8-tetrahydrofolate. It catalyses the reaction IMP + H2O = 5-formamido-1-(5-phospho-D-ribosyl)imidazole-4-carboxamide. The protein operates within purine metabolism; IMP biosynthesis via de novo pathway; 5-formamido-1-(5-phospho-D-ribosyl)imidazole-4-carboxamide from 5-amino-1-(5-phospho-D-ribosyl)imidazole-4-carboxamide (10-formyl THF route): step 1/1. It participates in purine metabolism; IMP biosynthesis via de novo pathway; IMP from 5-formamido-1-(5-phospho-D-ribosyl)imidazole-4-carboxamide: step 1/1. In Stutzerimonas stutzeri (strain A1501) (Pseudomonas stutzeri), this protein is Bifunctional purine biosynthesis protein PurH.